Consider the following 236-residue polypeptide: Cytochrome c biogenesis ATP-binding export protein CcmA (236 aa).

Residues 14–235 enclose the ABC transporter domain; sequence LEATGLQVAR…SAGDRVTGTE (222 aa). 46–53 contacts ATP; that stretch reads GANGSGKT.

Belongs to the ABC transporter superfamily. CcmA exporter (TC 3.A.1.107) family. As to quaternary structure, the complex is composed of two ATP-binding proteins (CcmA) and two transmembrane proteins (CcmB).

It localises to the cell inner membrane. It catalyses the reaction heme b(in) + ATP + H2O = heme b(out) + ADP + phosphate + H(+). Part of the ABC transporter complex CcmAB involved in the biogenesis of c-type cytochromes; once thought to export heme, this seems not to be the case, but its exact role is uncertain. Responsible for energy coupling to the transport system. This chain is Cytochrome c biogenesis ATP-binding export protein CcmA, found in Alkalilimnicola ehrlichii (strain ATCC BAA-1101 / DSM 17681 / MLHE-1).